The primary structure comprises 78 residues: Probable [Fe-S]-dependent transcriptional repressor (78 aa).

Residues cysteine 56, cysteine 61, cysteine 64, and cysteine 70 each contribute to the iron-sulfur cluster site.

It belongs to the FeoC family.

Its function is as follows. May function as a transcriptional regulator that controls feoABC expression. The protein is Probable [Fe-S]-dependent transcriptional repressor of Salmonella agona (strain SL483).